The chain runs to 347 residues: Dual-specificity RNA methyltransferase RlmN (347 aa).

Glu-93 serves as the catalytic Proton acceptor. The 229-residue stretch at 99–327 (DEGRNTLCIS…VITRDSRGSD (229 aa)) folds into the Radical SAM core domain. The cysteines at positions 106 and 332 are disulfide-linked. [4Fe-4S] cluster is bound by residues Cys-113, Cys-117, and Cys-120. S-adenosyl-L-methionine is bound by residues 158 to 159 (GE), Ser-190, 213 to 215 (SLN), and Asn-289. Cys-332 acts as the S-methylcysteine intermediate in catalysis.

This sequence belongs to the radical SAM superfamily. RlmN family. Requires [4Fe-4S] cluster as cofactor.

It localises to the cytoplasm. It catalyses the reaction adenosine(2503) in 23S rRNA + 2 reduced [2Fe-2S]-[ferredoxin] + 2 S-adenosyl-L-methionine = 2-methyladenosine(2503) in 23S rRNA + 5'-deoxyadenosine + L-methionine + 2 oxidized [2Fe-2S]-[ferredoxin] + S-adenosyl-L-homocysteine. The enzyme catalyses adenosine(37) in tRNA + 2 reduced [2Fe-2S]-[ferredoxin] + 2 S-adenosyl-L-methionine = 2-methyladenosine(37) in tRNA + 5'-deoxyadenosine + L-methionine + 2 oxidized [2Fe-2S]-[ferredoxin] + S-adenosyl-L-homocysteine. Functionally, specifically methylates position 2 of adenine 2503 in 23S rRNA and position 2 of adenine 37 in tRNAs. m2A2503 modification seems to play a crucial role in the proofreading step occurring at the peptidyl transferase center and thus would serve to optimize ribosomal fidelity. The polypeptide is Dual-specificity RNA methyltransferase RlmN (Pelobacter propionicus (strain DSM 2379 / NBRC 103807 / OttBd1)).